A 456-amino-acid chain; its full sequence is UDP-N-acetylmuramate--L-alanine ligase (456 aa).

Position 112–118 (112–118 (GAHGKTS)) interacts with ATP.

The protein belongs to the MurCDEF family.

The protein localises to the cytoplasm. It catalyses the reaction UDP-N-acetyl-alpha-D-muramate + L-alanine + ATP = UDP-N-acetyl-alpha-D-muramoyl-L-alanine + ADP + phosphate + H(+). It functions in the pathway cell wall biogenesis; peptidoglycan biosynthesis. Its function is as follows. Cell wall formation. This is UDP-N-acetylmuramate--L-alanine ligase from Desulforapulum autotrophicum (strain ATCC 43914 / DSM 3382 / VKM B-1955 / HRM2) (Desulfobacterium autotrophicum).